A 1050-amino-acid polypeptide reads, in one-letter code: Mitotic checkpoint serine/threonine-protein kinase BUB1 beta (1050 aa).

One can recognise a BUB1 N-terminal domain in the interval 62–226 (FEYEIRFYTG…FESSVPQRST (165 aa)). Residues 111-118 (GEKRYYSD) carry the Nuclear localization signal motif. The interval 152–185 (AQFYISWAEEYEARENFRKADAIFQEGIQQKAEP) is necessary for interaction with KNL1. The short motif at 224 to 232 (RSTLAELKS) is the D-box element. Lys250 is modified (N6-acetyllysine; by PCAF). At Ser367 the chain carries Phosphoserine. The disordered stretch occupies residues 368–393 (TRKPGKEEGDPLQRVQSHQQASEEKK). The residue at position 435 (Ser435) is a Phosphoserine. A disordered region spans residues 456–480 (IQTTQQERTGDQQEETMPTKETTKL). Residues Ser543, Ser665, and Ser670 each carry the phosphoserine modification. The residue at position 676 (Ser676) is a Phosphoserine; by PLK1. Ser697 carries the phosphoserine modification. The region spanning 766–1050 (YCIKREYLIC…LTSPGALLFQ (285 aa)) is the Protein kinase domain. 772-780 (YLICEDYKL) provides a ligand contact to ATP. At Thr792 the chain carries Phosphothreonine; by PLK1. Residue Lys795 participates in ATP binding. Asp882 acts as the Proton acceptor in catalysis. Position 1008 is a phosphothreonine; by PLK1 (Thr1008). Residue Thr1042 is modified to Phosphothreonine. Ser1043 is modified (phosphoserine).

It belongs to the protein kinase superfamily. Ser/Thr protein kinase family. BUB1 subfamily. In terms of assembly, interacts with CENPE. Interacts with PLK1. Part of a complex containing BUB3, CDC20 and BUB1B. Interacts with anaphase-promoting complex/cyclosome (APC/C). Interacts with KNL1. Interacts with KAT2B. Interacts with RIPK3. Interacts with the closed conformation form of MAD2L1. Post-translationally, proteolytically cleaved by caspase-3 in a cell cycle specific manner. The cleavage might be involved in the durability of the cell cycle delay. Caspase-3 cleavage is associated with abrogation of the mitotic checkpoint. The major site of cleavage is at Asp-610. In terms of processing, acetylation at Lys-250 regulates its degradation and timing in anaphase entry. Ubiquitinated. Degraded by the proteasome. Ubiquitinated by UBR5, promoting disassembly of the mitotic checkpoint complex from the APC/C complex. Post-translationally, sumoylated with SUMO2 and SUMO3. The sumoylation mediates the association with CENPE at the kinetochore. In terms of processing, autophosphorylated in vitro. Intramolecular autophosphorylation is stimulated by CENPE. Phosphorylated during mitosis and hyperphosphorylated in mitotically arrested cells. Phosphorylation at Ser-670 and Ser-1043 occurs at kinetochores upon mitotic entry with dephosphorylation at the onset of anaphase. In terms of tissue distribution, highly expressed in thymus followed by spleen. Preferentially expressed in tissues with a high mitotic index.

Its subcellular location is the cytoplasm. It is found in the nucleus. The protein resides in the chromosome. It localises to the centromere. The protein localises to the kinetochore. Its subcellular location is the cytoskeleton. It is found in the microtubule organizing center. The protein resides in the centrosome. The enzyme catalyses L-seryl-[protein] + ATP = O-phospho-L-seryl-[protein] + ADP + H(+). The catalysed reaction is L-threonyl-[protein] + ATP = O-phospho-L-threonyl-[protein] + ADP + H(+). Kinase activity stimulated by CENPE. Essential component of the mitotic checkpoint. Required for normal mitosis progression. The mitotic checkpoint delays anaphase until all chromosomes are properly attached to the mitotic spindle. One of its checkpoint functions is to inhibit the activity of the anaphase-promoting complex/cyclosome (APC/C) by blocking the binding of CDC20 to APC/C, independently of its kinase activity. The other is to monitor kinetochore activities that depend on the kinetochore motor CENPE. Required for kinetochore localization of CENPE. Negatively regulates PLK1 activity in interphase cells and suppresses centrosome amplification. Also implicated in triggering apoptosis in polyploid cells that exit aberrantly from mitotic arrest. May play a role for tumor suppression. This is Mitotic checkpoint serine/threonine-protein kinase BUB1 beta (BUB1B) from Homo sapiens (Human).